Here is a 248-residue protein sequence, read N- to C-terminus: Triosephosphate isomerase (248 aa).

Substrate is bound at residue 9–11; that stretch reads NWK. The active-site Electrophile is the H94. E166 acts as the Proton acceptor in catalysis. Substrate contacts are provided by residues G172, S212, and 233–234; that span reads GG.

The protein belongs to the triosephosphate isomerase family. In terms of assembly, homodimer.

It is found in the cytoplasm. It catalyses the reaction D-glyceraldehyde 3-phosphate = dihydroxyacetone phosphate. It functions in the pathway carbohydrate biosynthesis; gluconeogenesis. Its pathway is carbohydrate degradation; glycolysis; D-glyceraldehyde 3-phosphate from glycerone phosphate: step 1/1. Its function is as follows. Involved in the gluconeogenesis. Catalyzes stereospecifically the conversion of dihydroxyacetone phosphate (DHAP) to D-glyceraldehyde-3-phosphate (G3P). The sequence is that of Triosephosphate isomerase from Clostridium botulinum (strain ATCC 19397 / Type A).